The primary structure comprises 271 residues: Protein FAM110D (271 aa).

A compositionally biased stretch (polar residues) spans 1–13 (MLLSSPTTPSRGR). 3 disordered regions span residues 1 to 84 (MLLS…PDSL), 118 to 149 (DAAPSSPAPTERPGAPAGWAGSPDTPEATGKR), and 186 to 242 (PQSW…GRPT).

Belongs to the FAM110 family.

The polypeptide is Protein FAM110D (Mus musculus (Mouse)).